Here is a 423-residue protein sequence, read N- to C-terminus: Acetylornithine aminotransferase, mitochondrial (423 aa).

The transit peptide at methionine 1 to arginine 13 directs the protein to the mitochondrion. At lysine 276 the chain carries N6-(pyridoxal phosphate)lysine.

Belongs to the class-III pyridoxal-phosphate-dependent aminotransferase family. Requires pyridoxal 5'-phosphate as cofactor.

Its subcellular location is the mitochondrion matrix. It catalyses the reaction N(2)-acetyl-L-ornithine + 2-oxoglutarate = N-acetyl-L-glutamate 5-semialdehyde + L-glutamate. The protein operates within amino-acid biosynthesis; L-arginine biosynthesis; N(2)-acetyl-L-ornithine from L-glutamate: step 4/4. Its function is as follows. catalyzes the conversion of N-acetylglutamate-gamma-semialdehyde (NAGSA) to N-acetylornithine in arginine biosynthesis. This Saccharomyces cerevisiae (strain ATCC 204508 / S288c) (Baker's yeast) protein is Acetylornithine aminotransferase, mitochondrial (ARG8).